The primary structure comprises 217 residues: ATP synthase F(0) complex subunit a (217 aa).

Helical transmembrane passes span 20–40 (MNWI…WILP), 70–90 (PAFL…FSLF), 100–120 (MVFS…LSTC), 126–146 (MIAH…MTII), 166–188 (LIAG…IIFI), and 193–215 (MIFE…SLYS).

The protein belongs to the ATPase A chain family. Component of the ATP synthase complex composed at least of ATP5F1A/subunit alpha, ATP5F1B/subunit beta, ATP5MC1/subunit c (homooctomer), MT-ATP6/subunit a, MT-ATP8/subunit 8, ATP5ME/subunit e, ATP5MF/subunit f, ATP5MG/subunit g, ATP5MK/subunit k, ATP5MJ/subunit j, ATP5F1C/subunit gamma, ATP5F1D/subunit delta, ATP5F1E/subunit epsilon, ATP5PF/subunit F6, ATP5PB/subunit b, ATP5PD/subunit d, ATP5PO/subunit OSCP. ATP synthase complex consists of a soluble F(1) head domain (subunits alpha(3) and beta(3)) - the catalytic core - and a membrane F(0) domain - the membrane proton channel (subunits c, a, 8, e, f, g, k and j). These two domains are linked by a central stalk (subunits gamma, delta, and epsilon) rotating inside the F1 region and a stationary peripheral stalk (subunits F6, b, d, and OSCP). Interacts with DNAJC30; interaction is direct.

Its subcellular location is the mitochondrion inner membrane. The catalysed reaction is H(+)(in) = H(+)(out). In terms of biological role, subunit a, of the mitochondrial membrane ATP synthase complex (F(1)F(0) ATP synthase or Complex V) that produces ATP from ADP in the presence of a proton gradient across the membrane which is generated by electron transport complexes of the respiratory chain. ATP synthase complex consist of a soluble F(1) head domain - the catalytic core - and a membrane F(1) domain - the membrane proton channel. These two domains are linked by a central stalk rotating inside the F(1) region and a stationary peripheral stalk. During catalysis, ATP synthesis in the catalytic domain of F(1) is coupled via a rotary mechanism of the central stalk subunits to proton translocation. With the subunit c (ATP5MC1), forms the proton-conducting channel in the F(0) domain, that contains two crucial half-channels (inlet and outlet) that facilitate proton movement from the mitochondrial intermembrane space (IMS) into the matrix. Protons are taken up via the inlet half-channel and released through the outlet half-channel, following a Grotthuss mechanism. The protein is ATP synthase F(0) complex subunit a of Rhopalosiphum padi (Bird cherry-oat aphid).